The primary structure comprises 144 residues: Protein MIX23 (144 aa).

N-acetylalanine is present on A2. Residues 82–120 are a coiled coil; sequence VKSLREEREKNLDDLTLLKRLRKEQTKLKWMQSELNVEE. N6-acetyllysine is present on K100.

Belongs to the MIX23 family.

The polypeptide is Protein MIX23 (Mus musculus (Mouse)).